Consider the following 1571-residue polypeptide: Pentafunctional AROM polypeptide (1571 aa).

A 3-dehydroquinate synthase region spans residues 1-384; it reads MEQPTTIQIL…HEQKASVVSN (384 aa). Residues 44–46, 81–84, 114–116, and Asp-119 contribute to the NAD(+) site; these read DTN, ESSK, and GGV. Arg-130 provides a ligand contact to 7-phospho-2-dehydro-3-deoxy-D-arabino-heptonate. NAD(+) is bound at residue 139-140; the sequence is TT. 7-phospho-2-dehydro-3-deoxy-D-arabino-heptonate contacts are provided by Asp-146 and Lys-152. Lys-161 is a binding site for NAD(+). Asn-162 contributes to the 7-phospho-2-dehydro-3-deoxy-D-arabino-heptonate binding site. Residues 179 to 182 and Asn-190 each bind NAD(+); that span reads FLNT. Glu-194 serves as a coordination point for Zn(2+). Residues 194–197 and Lys-250 each bind 7-phospho-2-dehydro-3-deoxy-D-arabino-heptonate; that span reads EVIK. The active-site Proton acceptor; for 3-dehydroquinate synthase activity is the Glu-260. Residues 264–268 and His-271 contribute to the 7-phospho-2-dehydro-3-deoxy-D-arabino-heptonate site; that span reads RNLLN. His-271 contributes to the Zn(2+) binding site. His-275 serves as the catalytic Proton acceptor; for 3-dehydroquinate synthase activity. Residues His-287 and Lys-356 each coordinate 7-phospho-2-dehydro-3-deoxy-D-arabino-heptonate. Residue His-287 participates in Zn(2+) binding. The segment at 397 to 843 is EPSP synthase; the sequence is VLPGIPKPLN…WDALAQTFKV (447 aa). Cys-825 serves as the catalytic For EPSP synthase activity. The shikimate kinase stretch occupies residues 866–1057; the sequence is ASIFIIGMRG…KKKDHSFFVS (192 aa). Residue 872 to 879 participates in ATP binding; the sequence is GMRGAGKT. Residues 1058–1278 form a 3-dehydroquinase region; the sequence is LTLPDLQLSA…AAPGQVSAKD (221 aa). His-1181 (proton acceptor; for 3-dehydroquinate dehydratase activity) is an active-site residue. Lys-1209 acts as the Schiff-base intermediate with substrate; for 3-dehydroquinate dehydratase activity in catalysis. The interval 1291-1571 is shikimate dehydrogenase; sequence AKKFALFGKP…EDARAAVMNI (281 aa).

It in the N-terminal section; belongs to the sugar phosphate cyclases superfamily. Dehydroquinate synthase family. This sequence in the 2nd section; belongs to the EPSP synthase family. The protein in the 3rd section; belongs to the shikimate kinase family. In the 4th section; belongs to the type-I 3-dehydroquinase family. It in the C-terminal section; belongs to the shikimate dehydrogenase family. Homodimer. It depends on Zn(2+) as a cofactor.

It localises to the cytoplasm. The enzyme catalyses 7-phospho-2-dehydro-3-deoxy-D-arabino-heptonate = 3-dehydroquinate + phosphate. The catalysed reaction is 3-dehydroquinate = 3-dehydroshikimate + H2O. It catalyses the reaction shikimate + NADP(+) = 3-dehydroshikimate + NADPH + H(+). It carries out the reaction shikimate + ATP = 3-phosphoshikimate + ADP + H(+). The enzyme catalyses 3-phosphoshikimate + phosphoenolpyruvate = 5-O-(1-carboxyvinyl)-3-phosphoshikimate + phosphate. Its pathway is metabolic intermediate biosynthesis; chorismate biosynthesis; chorismate from D-erythrose 4-phosphate and phosphoenolpyruvate: step 2/7. It participates in metabolic intermediate biosynthesis; chorismate biosynthesis; chorismate from D-erythrose 4-phosphate and phosphoenolpyruvate: step 3/7. The protein operates within metabolic intermediate biosynthesis; chorismate biosynthesis; chorismate from D-erythrose 4-phosphate and phosphoenolpyruvate: step 4/7. It functions in the pathway metabolic intermediate biosynthesis; chorismate biosynthesis; chorismate from D-erythrose 4-phosphate and phosphoenolpyruvate: step 5/7. Its pathway is metabolic intermediate biosynthesis; chorismate biosynthesis; chorismate from D-erythrose 4-phosphate and phosphoenolpyruvate: step 6/7. In terms of biological role, the AROM polypeptide catalyzes 5 consecutive enzymatic reactions in prechorismate polyaromatic amino acid biosynthesis. The protein is Pentafunctional AROM polypeptide of Arthroderma otae (strain ATCC MYA-4605 / CBS 113480) (Microsporum canis).